Here is a 213-residue protein sequence, read N- to C-terminus: Imidazole glycerol phosphate synthase subunit HisH (213 aa).

The region spanning 4–211 (NLGLIDYGMG…LTWLRNGAEP (208 aa)) is the Glutamine amidotransferase type-1 domain. Cys82 (nucleophile) is an active-site residue. Residues His186 and Glu188 contribute to the active site.

As to quaternary structure, heterodimer of HisH and HisF.

The protein resides in the cytoplasm. The catalysed reaction is 5-[(5-phospho-1-deoxy-D-ribulos-1-ylimino)methylamino]-1-(5-phospho-beta-D-ribosyl)imidazole-4-carboxamide + L-glutamine = D-erythro-1-(imidazol-4-yl)glycerol 3-phosphate + 5-amino-1-(5-phospho-beta-D-ribosyl)imidazole-4-carboxamide + L-glutamate + H(+). It carries out the reaction L-glutamine + H2O = L-glutamate + NH4(+). It functions in the pathway amino-acid biosynthesis; L-histidine biosynthesis; L-histidine from 5-phospho-alpha-D-ribose 1-diphosphate: step 5/9. In terms of biological role, IGPS catalyzes the conversion of PRFAR and glutamine to IGP, AICAR and glutamate. The HisH subunit catalyzes the hydrolysis of glutamine to glutamate and ammonia as part of the synthesis of IGP and AICAR. The resulting ammonia molecule is channeled to the active site of HisF. The sequence is that of Imidazole glycerol phosphate synthase subunit HisH from Synechococcus sp. (strain CC9605).